The primary structure comprises 517 residues: AAA ATPase forming ring-shaped complexes (517 aa).

Residues 25–53 adopt a coiled-coil conformation; it reads ARNAKLVELLQASRTKLEEINGRLEALAE. 233 to 238 is an ATP binding site; sequence GNGKTL.

This sequence belongs to the AAA ATPase family. In terms of assembly, homohexamer. Assembles into a hexameric ring structure.

The polypeptide is AAA ATPase forming ring-shaped complexes (Corynebacterium jeikeium (strain K411)).